An 88-amino-acid chain; its full sequence is Exodeoxyribonuclease 7 small subunit (88 aa).

The disordered stretch occupies residues Ala-69–Ala-88.

This sequence belongs to the XseB family. As to quaternary structure, heterooligomer composed of large and small subunits.

Its subcellular location is the cytoplasm. The catalysed reaction is Exonucleolytic cleavage in either 5'- to 3'- or 3'- to 5'-direction to yield nucleoside 5'-phosphates.. Bidirectionally degrades single-stranded DNA into large acid-insoluble oligonucleotides, which are then degraded further into small acid-soluble oligonucleotides. In Streptomyces coelicolor (strain ATCC BAA-471 / A3(2) / M145), this protein is Exodeoxyribonuclease 7 small subunit.